A 230-amino-acid chain; its full sequence is Biosynthetic peptidoglycan transglycosylase (230 aa).

The chain crosses the membrane as a helical span at residues 10-30 (IFLFFIAVIFVYQFWIFSQIV).

This sequence belongs to the glycosyltransferase 51 family.

The protein resides in the cell inner membrane. The enzyme catalyses [GlcNAc-(1-&gt;4)-Mur2Ac(oyl-L-Ala-gamma-D-Glu-L-Lys-D-Ala-D-Ala)](n)-di-trans,octa-cis-undecaprenyl diphosphate + beta-D-GlcNAc-(1-&gt;4)-Mur2Ac(oyl-L-Ala-gamma-D-Glu-L-Lys-D-Ala-D-Ala)-di-trans,octa-cis-undecaprenyl diphosphate = [GlcNAc-(1-&gt;4)-Mur2Ac(oyl-L-Ala-gamma-D-Glu-L-Lys-D-Ala-D-Ala)](n+1)-di-trans,octa-cis-undecaprenyl diphosphate + di-trans,octa-cis-undecaprenyl diphosphate + H(+). Its pathway is cell wall biogenesis; peptidoglycan biosynthesis. Functionally, peptidoglycan polymerase that catalyzes glycan chain elongation from lipid-linked precursors. This is Biosynthetic peptidoglycan transglycosylase from Nitrosospira multiformis (strain ATCC 25196 / NCIMB 11849 / C 71).